The chain runs to 400 residues: Enolase (400 aa).

Gln-154 is a binding site for (2R)-2-phosphoglycerate. Glu-197 functions as the Proton donor in the catalytic mechanism. Mg(2+) contacts are provided by Asp-233, Glu-274, and Asp-301. (2R)-2-phosphoglycerate-binding residues include Lys-326, Arg-355, Ser-356, and Lys-377. The active-site Proton acceptor is the Lys-326.

Belongs to the enolase family. The cofactor is Mg(2+).

The protein resides in the cytoplasm. It localises to the secreted. The protein localises to the cell surface. It catalyses the reaction (2R)-2-phosphoglycerate = phosphoenolpyruvate + H2O. Its pathway is carbohydrate degradation; glycolysis; pyruvate from D-glyceraldehyde 3-phosphate: step 4/5. Its function is as follows. Catalyzes the reversible conversion of 2-phosphoglycerate (2-PG) into phosphoenolpyruvate (PEP). It is essential for the degradation of carbohydrates via glycolysis. The chain is Enolase from Picrophilus torridus (strain ATCC 700027 / DSM 9790 / JCM 10055 / NBRC 100828 / KAW 2/3).